The primary structure comprises 553 residues: Putative transport protein YidE (553 aa).

Helical transmembrane passes span 4-24, 28-48, 65-85, 95-115, and 158-178; these read IALT…IGNI, GVGF…HFVD, FGLI…FFAS, LFAV…HKIF, and MSYA…MWLM. RCK C-terminal domains lie at 192–276 and 279–361; these read KHES…VIGK and DTSL…VVGN. 6 helical membrane-spanning segments follow: residues 371–391, 393–413, 437–457, 464–484, 493–513, and 533–553; these read MLPV…PLFV, GFPV…ALIL, LGIV…FVDT, LSWI…IGLL, YLTL…LAFA, and LVMF…WGMG.

This sequence belongs to the AAE transporter (TC 2.A.81) family. YidE subfamily.

It localises to the cell membrane. This Salmonella paratyphi C (strain RKS4594) protein is Putative transport protein YidE.